A 250-amino-acid chain; its full sequence is Alpha/beta hydrolase nvfD (250 aa).

Residues aspartate 198 and histidine 226 each act as charge relay system in the active site.

It belongs to the AB hydrolase superfamily.

It functions in the pathway secondary metabolite biosynthesis; terpenoid biosynthesis. Alpha/beta hydrolase; part of the gene cluster that mediates the biosynthesis of novofumigatonin, a heavily oxygenated meroterpenoid containing a unique orthoester moiety. The first step of the pathway is the synthesis of 3,5-dimethylorsellinic acid (DMOA) by the polyketide synthase nvfA via condensation of one acetyl-CoA starter unit with 3 malonyl-CoA units and 2 methylations. DMOA is then converted to farnesyl-DMOA by the farnesyltransferase nvfB. Epoxydation by FAD-dependent monooxygenase nvfK, followed by a protonation-initiated cyclization catalyzed by the terpene cyclase nvfL leads to the production of asnavolin H. The short chain dehydrogenase nvfC then as a 3-OH dehydrogenase of asnovolin H to yield chemesin D. There are two branches to synthesize asnovolin A from chemesin D. In one branch, chemesin D undergoes Baeyer-Villiger oxidation by nvfH, methylation by nvfJ, and enoyl reduction by the nvfM D enoylreductase that reduces the double bond between C-5'and C-6', to form respectively asnovolin I, asnovolin K, and asnovolin A. In the other branch, the methylation precedes the Baeyer-Villiger oxidation and the enoyl reduction to yield asnovolin A via the asnovolin J intermediate. Asnovolin A is further converted to fumigatonoid A by the Fe(II)/2-oxoglutarate-dependent dioxygenase nvfI that catalyzes an endoperoxidation reaction. The alpha/beta hydrolase nvfD then acts as an epimerase that converts fumigatonoid A to its C-5' epimer, which then undergoes spontaneous or nvfD-catalyzed lactonization. The following step utilizes the ketoreductase nvfG to produce fumigatonoid B. The dioxygenase nvfE further converts fumigatonoid B into fumigatonoid C. Finally the Fe(II)/2-oxoglutarate-dependent dioxygenase nvfF catalyzes two rounds of oxidation to transform fumigatonoid C into the end product, novofumigatonin A. This Aspergillus novofumigatus (strain IBT 16806) protein is Alpha/beta hydrolase nvfD.